The sequence spans 121 residues: Large ribosomal subunit protein bL20 (121 aa).

The protein belongs to the bacterial ribosomal protein bL20 family.

Binds directly to 23S ribosomal RNA and is necessary for the in vitro assembly process of the 50S ribosomal subunit. It is not involved in the protein synthesizing functions of that subunit. The chain is Large ribosomal subunit protein bL20 from Polynucleobacter asymbioticus (strain DSM 18221 / CIP 109841 / QLW-P1DMWA-1) (Polynucleobacter necessarius subsp. asymbioticus).